The sequence spans 91 residues: UPF0250 protein BB0170 (91 aa).

Belongs to the UPF0250 family.

The polypeptide is UPF0250 protein BB0170 (Bordetella bronchiseptica (strain ATCC BAA-588 / NCTC 13252 / RB50) (Alcaligenes bronchisepticus)).